We begin with the raw amino-acid sequence, 409 residues long: uncharacterized protein (409 aa).

12 helical membrane passes run 3-23 (IIVK…PTTE), 43-63 (ITQI…LSLG), 73-93 (PIVL…IFSV), 95-115 (IEML…GSVI), 135-155 (ILSP…GYII), 162-182 (YVFV…YKIL), 209-229 (ILWL…GFFI), 248-268 (KLAF…GYLI), 283-303 (FIFS…LEFI), 309-329 (LAIS…SLLI), 346-366 (TAGS…TYCV), and 379-399 (LLCL…CILY).

The protein belongs to the major facilitator superfamily. Bcr/CmlA family.

Its subcellular location is the cell inner membrane. This is an uncharacterized protein from Rickettsia typhi (strain ATCC VR-144 / Wilmington).